We begin with the raw amino-acid sequence, 296 residues long: Probable endonuclease 4 (296 aa).

Residues histidine 68, histidine 108, glutamate 145, aspartate 179, histidine 182, histidine 216, aspartate 229, histidine 231, and glutamate 261 each coordinate Zn(2+).

This sequence belongs to the AP endonuclease 2 family. The cofactor is Zn(2+).

It catalyses the reaction Endonucleolytic cleavage to 5'-phosphooligonucleotide end-products.. Functionally, endonuclease IV plays a role in DNA repair. It cleaves phosphodiester bonds at apurinic or apyrimidinic (AP) sites, generating a 3'-hydroxyl group and a 5'-terminal sugar phosphate. In Geobacter sulfurreducens (strain ATCC 51573 / DSM 12127 / PCA), this protein is Probable endonuclease 4.